We begin with the raw amino-acid sequence, 84 residues long: UPF0473 protein CLJ_B2791 (84 aa).

The protein belongs to the UPF0473 family.

The sequence is that of UPF0473 protein CLJ_B2791 from Clostridium botulinum (strain 657 / Type Ba4).